The following is a 168-amino-acid chain: Diphosphoinositol polyphosphate phosphohydrolase 1 (168 aa).

Position 1 is an N-acetylmethionine (methionine 1). Substrate contacts are provided by residues arginine 10, 18 to 20 (KKR), and 39 to 41 (SSR). One can recognise a Nudix hydrolase domain in the interval 17–142 (YKKRAACLCF…KPVQASYFEA (126 aa)). Mg(2+) contacts are provided by glycine 50 and glutamate 66. The short motif at 51–72 (GGMEPEEEPSVAAVREVCEEAG) is the Nudix box element. The Proton acceptor role is filled by glutamate 69. Glutamate 70 is a binding site for Mg(2+). Substrate is bound by residues 89-91 (RKH), arginine 115, and lysine 133.

Belongs to the Nudix hydrolase family. DIPP subfamily. In terms of assembly, monomer. The cofactor is Mg(2+). It depends on Mn(2+) as a cofactor. Zn(2+) is required as a cofactor.

The protein resides in the cytoplasm. The protein localises to the nucleus. It catalyses the reaction diphospho-myo-inositol polyphosphate + H2O = myo-inositol polyphosphate + phosphate.. The catalysed reaction is 5-diphospho-1D-myo-inositol 1,2,3,4,6-pentakisphosphate + H2O = 1D-myo-inositol hexakisphosphate + phosphate + H(+). It carries out the reaction 3,5-bis(diphospho)-1D-myo-inositol 1,2,4,6-tetrakisphosphate + H2O = 3-diphospho-1D-myo-inositol 1,2,4,5,6-pentakisphosphate + phosphate + 2 H(+). The enzyme catalyses [phosphate](n+1) + n H2O = (n+1) phosphate + n H(+). It catalyses the reaction P(1),P(5)-bis(5'-adenosyl) pentaphosphate + H2O = ADP + ATP + 2 H(+). The catalysed reaction is P(1),P(6)-bis(5'-adenosyl) hexaphosphate + H2O = 2 ATP + 2 H(+). It carries out the reaction P(1),P(4)-bis(5'-adenosyl) tetraphosphate + H2O = AMP + ATP + 2 H(+). The enzyme catalyses a 5'-end (N(7)-methyl 5'-triphosphoguanosine)-ribonucleoside in mRNA + H2O = N(7)-methyl-GMP + a 5'-end diphospho-ribonucleoside in mRNA + 2 H(+). It catalyses the reaction a 5'-end (N(7)-methyl 5'-triphosphoguanosine)-ribonucleoside in mRNA + H2O = N(7)-methyl-GDP + a 5'-end phospho-ribonucleoside in mRNA + 2 H(+). With respect to regulation, diphosphoinositol polyphosphate phosphohydrolase is inhibited by fluoride and InsP6. Functionally, cleaves a beta-phosphate from the diphosphate groups in PP-InsP5 (diphosphoinositol pentakisphosphate) and [PP]2-InsP4 (bisdiphosphoinositol tetrakisphosphate), suggesting that it may play a role in signal transduction. InsP6 (inositol hexakisphosphate) is not a substrate. Acts as a negative regulator of the ERK1/2 pathway. Also able to catalyze the hydrolysis of dinucleoside oligophosphates, with diadenosine 5',5'''-P1,P6-hexaphosphate (Ap6A) and diadenosine 5',5'''- P1,P5-pentaphosphate (Ap5A) being the preferred substrates. The major reaction products are ADP and p4a from Ap6A and ADP and ATP from Ap5A. Also able to hydrolyze 5- phosphoribose 1-diphosphate. Acts as a decapping enzyme that can hydrolyze both monomethylated and unmethylated capped RNAs. Hydrolyzes monomethylated capped RNA after both the alpha- and beta-phosphates generating m7GMP + ppRNA and m7GDP + pRNA. Modulates the stability of a subset of mRNAs implicated in cell motility. Divalent cations zinc, magnesium and manganese determine its substrate specificity. Exhibits endopolyphosphatase activity in the presence of zinc ions. Exhibits diphosphoinositol polyphosphate phosphohydrolase in the presence of magnesium ions and diadenosine hexaphosphate hydrolase activity in the presence of manganese ions. Plays an important role in limiting DNA damage and maintaining cell survival upon oxidative stress via its endopolyphosphatase activity. The sequence is that of Diphosphoinositol polyphosphate phosphohydrolase 1 from Rattus norvegicus (Rat).